The sequence spans 421 residues: Serine--tRNA ligase (421 aa).

Residue 230–232 coordinates L-serine; that stretch reads TAE. ATP is bound at residue 261–263; it reads RRE. Glu284 contributes to the L-serine binding site. Position 348-351 (348-351) interacts with ATP; sequence EISS. Ser383 contacts L-serine.

The protein belongs to the class-II aminoacyl-tRNA synthetase family. Type-1 seryl-tRNA synthetase subfamily. Homodimer. The tRNA molecule binds across the dimer.

It is found in the cytoplasm. The catalysed reaction is tRNA(Ser) + L-serine + ATP = L-seryl-tRNA(Ser) + AMP + diphosphate + H(+). The enzyme catalyses tRNA(Sec) + L-serine + ATP = L-seryl-tRNA(Sec) + AMP + diphosphate + H(+). It functions in the pathway aminoacyl-tRNA biosynthesis; selenocysteinyl-tRNA(Sec) biosynthesis; L-seryl-tRNA(Sec) from L-serine and tRNA(Sec): step 1/1. Catalyzes the attachment of serine to tRNA(Ser). Is also able to aminoacylate tRNA(Sec) with serine, to form the misacylated tRNA L-seryl-tRNA(Sec), which will be further converted into selenocysteinyl-tRNA(Sec). This is Serine--tRNA ligase from Finegoldia magna (strain ATCC 29328 / DSM 20472 / WAL 2508) (Peptostreptococcus magnus).